The chain runs to 254 residues: MCSCLVVKNTVIGSGRTKIAVPLVARDAAVLSAVLDQIKNLPFDIVEFRADFLECAGSIGEVLRHTQTVRDALPDKPLLFTFRRHGEGGSFPCSDDYYFELLDALIESRLPDIIDIELFSGETAVRCAVANAQKNGIAALLCNHEFHRTPPQEEIVCRLKQMEDCGADICKIAVMPQSAEDVLTLLSATLKAKELAAKPIVTMSMGQTGAVSRLAGQVFGSSITFGSGTQNSAPGQIGVSALRATLDCLENGAD.

Residues 47–49 (EFR) and Arg-83 contribute to the 3-dehydroquinate site. His-144 acts as the Proton donor/acceptor in catalysis. Residue Lys-171 is the Schiff-base intermediate with substrate of the active site. The 3-dehydroquinate site is built by Arg-213, Ser-232, and Gln-236.

This sequence belongs to the type-I 3-dehydroquinase family. In terms of assembly, homodimer.

It catalyses the reaction 3-dehydroquinate = 3-dehydroshikimate + H2O. It participates in metabolic intermediate biosynthesis; chorismate biosynthesis; chorismate from D-erythrose 4-phosphate and phosphoenolpyruvate: step 3/7. Functionally, involved in the third step of the chorismate pathway, which leads to the biosynthesis of aromatic amino acids. Catalyzes the cis-dehydration of 3-dehydroquinate (DHQ) and introduces the first double bond of the aromatic ring to yield 3-dehydroshikimate. This is 3-dehydroquinate dehydratase from Neisseria meningitidis serogroup A / serotype 4A (strain DSM 15465 / Z2491).